A 70-amino-acid chain; its full sequence is Cytochrome c oxidase subunit 8B, mitochondrial (70 aa).

The N-terminal 24 residues, 1-24, are a transit peptide targeting the mitochondrion; it reads MPRLPPILRLLQAPAKFTVVPKAH. Residues 25–38 lie on the Mitochondrial matrix side of the membrane; that stretch reads VSAKPAKTPTSAVE. A helical transmembrane segment spans residues 39 to 60; that stretch reads QAVGISAIVVGFMVPAGWVLAH. Residues 61–70 lie on the Mitochondrial intermembrane side of the membrane; the sequence is LESYKKSSAA.

Belongs to the cytochrome c oxidase VIII family. As to quaternary structure, component of the cytochrome c oxidase (complex IV, CIV), a multisubunit enzyme composed of 14 subunits. The complex is composed of a catalytic core of 3 subunits MT-CO1, MT-CO2 and MT-CO3, encoded in the mitochondrial DNA, and 11 supernumerary subunits COX4I, COX5A, COX5B, COX6A, COX6B, COX6C, COX7A, COX7B, COX7C, COX8 and NDUFA4, which are encoded in the nuclear genome. The complex exists as a monomer or a dimer and forms supercomplexes (SCs) in the inner mitochondrial membrane with NADH-ubiquinone oxidoreductase (complex I, CI) and ubiquinol-cytochrome c oxidoreductase (cytochrome b-c1 complex, complex III, CIII), resulting in different assemblies (supercomplex SCI(1)III(2)IV(1) and megacomplex MCI(2)III(2)IV(2)).

It is found in the mitochondrion inner membrane. It participates in energy metabolism; oxidative phosphorylation. Functionally, component of the cytochrome c oxidase, the last enzyme in the mitochondrial electron transport chain which drives oxidative phosphorylation. The respiratory chain contains 3 multisubunit complexes succinate dehydrogenase (complex II, CII), ubiquinol-cytochrome c oxidoreductase (cytochrome b-c1 complex, complex III, CIII) and cytochrome c oxidase (complex IV, CIV), that cooperate to transfer electrons derived from NADH and succinate to molecular oxygen, creating an electrochemical gradient over the inner membrane that drives transmembrane transport and the ATP synthase. Cytochrome c oxidase is the component of the respiratory chain that catalyzes the reduction of oxygen to water. Electrons originating from reduced cytochrome c in the intermembrane space (IMS) are transferred via the dinuclear copper A center (CU(A)) of subunit 2 and heme A of subunit 1 to the active site in subunit 1, a binuclear center (BNC) formed by heme A3 and copper B (CU(B)). The BNC reduces molecular oxygen to 2 water molecules using 4 electrons from cytochrome c in the IMS and 4 protons from the mitochondrial matrix. This chain is Cytochrome c oxidase subunit 8B, mitochondrial (Cox8b), found in Mus musculus (Mouse).